Here is a 771-residue protein sequence, read N- to C-terminus: Putative 8-amino-7-oxononanoate synthase 2 (771 aa).

The segment at 1 to 418 (MPTGLGYDFL…TVKAAELGEI (418 aa)) is unknown. Arg407 contacts substrate. The interval 419-771 (VLLGTNSYLG…EDLTPQGAAL (353 aa)) is KAPA synthase. 485–486 (GY) lines the pyridoxal 5'-phosphate pocket. His510 lines the substrate pocket. Residues Ser556 and 581–584 (DESH) contribute to the pyridoxal 5'-phosphate site. Lys615 carries the N6-(pyridoxal phosphate)lysine modification.

The protein in the C-terminal section; belongs to the class-II pyridoxal-phosphate-dependent aminotransferase family. BioF subfamily. The cofactor is pyridoxal 5'-phosphate.

It catalyses the reaction 6-carboxyhexanoyl-[ACP] + L-alanine + H(+) = (8S)-8-amino-7-oxononanoate + holo-[ACP] + CO2. Catalyzes the decarboxylative condensation of pimeloyl-[acyl-carrier protein] and L-alanine to produce 8-amino-7-oxononanoate (AON), [acyl-carrier protein], and carbon dioxide. This is Putative 8-amino-7-oxononanoate synthase 2 (bioF2) from Mycobacterium tuberculosis (strain CDC 1551 / Oshkosh).